A 187-amino-acid polypeptide reads, in one-letter code: GTP cyclohydrolase 1 (187 aa).

Cys74, His77, and Cys145 together coordinate Zn(2+).

It belongs to the GTP cyclohydrolase I family. As to quaternary structure, homomer.

It carries out the reaction GTP + H2O = 7,8-dihydroneopterin 3'-triphosphate + formate + H(+). It functions in the pathway cofactor biosynthesis; 7,8-dihydroneopterin triphosphate biosynthesis; 7,8-dihydroneopterin triphosphate from GTP: step 1/1. This chain is GTP cyclohydrolase 1, found in Sulfurihydrogenibium sp. (strain YO3AOP1).